Reading from the N-terminus, the 453-residue chain is Ubiquitin-associated protein 1 (453 aa).

The UMA domain maps to 19-65 (LDDVPFKLNEKFRCPSKVGLPIGFCLSDCNAILSDLQYDFNLERRTV). Over residues 83–93 (EAIRTDSESER) the composition is skewed to basic and acidic residues. Disordered stretches follow at residues 83-119 (EAIR…QDIV), 189-223 (LQSQ…AKTG), and 260-335 (FPKL…AGTT). Residues 189-199 (LQSQPQSSVSP) are compositionally biased toward low complexity. Residues 285–328 (NLSNGTPPSLQRTASNNNTTLPQEQPVFAQNGTPKQSNPVTVTS) show a composition bias toward polar residues. 2 UBA domains span residues 340–381 (SPSE…LFTH) and 403–449 (GSEE…LMTR).

In terms of assembly, component of an ESCRT-I complex (endosomal sorting complex required for transport I).

The protein localises to the cytoplasm. Its subcellular location is the cytosol. It is found in the endosome. Its function is as follows. Component of the ESCRT-I complex, a regulator of vesicular trafficking process. Binds to ubiquitinated cargo proteins and is required for the sorting of endocytic ubiquitinated cargos into multivesicular bodies (MVBs). The protein is Ubiquitin-associated protein 1 of Danio rerio (Zebrafish).